The chain runs to 362 residues: Phosphoserine aminotransferase (362 aa).

Residue R43 coordinates L-glutamate. Residues 77–78 (AS), W103, T153, D173, and Q196 each bind pyridoxal 5'-phosphate. K197 carries the post-translational modification N6-(pyridoxal phosphate)lysine. 238–239 (NT) is a pyridoxal 5'-phosphate binding site.

It belongs to the class-V pyridoxal-phosphate-dependent aminotransferase family. SerC subfamily. In terms of assembly, homodimer. Pyridoxal 5'-phosphate serves as cofactor.

The protein resides in the cytoplasm. The enzyme catalyses O-phospho-L-serine + 2-oxoglutarate = 3-phosphooxypyruvate + L-glutamate. It carries out the reaction 4-(phosphooxy)-L-threonine + 2-oxoglutarate = (R)-3-hydroxy-2-oxo-4-phosphooxybutanoate + L-glutamate. It functions in the pathway amino-acid biosynthesis; L-serine biosynthesis; L-serine from 3-phospho-D-glycerate: step 2/3. It participates in cofactor biosynthesis; pyridoxine 5'-phosphate biosynthesis; pyridoxine 5'-phosphate from D-erythrose 4-phosphate: step 3/5. Functionally, catalyzes the reversible conversion of 3-phosphohydroxypyruvate to phosphoserine and of 3-hydroxy-2-oxo-4-phosphonooxybutanoate to phosphohydroxythreonine. The protein is Phosphoserine aminotransferase (serC) of Niallia circulans (Bacillus circulans).